A 285-amino-acid chain; its full sequence is HTH-type transcriptional regulator MurR (285 aa).

An HTH rpiR-type domain is found at 1–77; the sequence is MLYLTKISNA…MALIGEYSAS (77 aa). Positions 37–56 form a DNA-binding region, H-T-H motif; the sequence is SRQMAKQLGISQSSIVKFAQ. The SIS domain occupies 128–279; it reads IIEVISKAPF…SLKMIQRSSE (152 aa).

In terms of assembly, homotetramer.

The protein operates within amino-sugar metabolism; N-acetylmuramate degradation [regulation]. Its function is as follows. Represses the expression of the murPQ operon involved in the uptake and degradation of N-acetylmuramic acid (MurNAc). Binds to two adjacent inverted repeats within the operator region. MurNAc 6-phosphate, the substrate of MurQ, is the specific inducer that weakens binding of MurR to the operator. The protein is HTH-type transcriptional regulator MurR of Shigella boydii serotype 18 (strain CDC 3083-94 / BS512).